A 143-amino-acid chain; its full sequence is MFLGTYTPKLDDKGRLTLPAKFRDELTGGLVVTKGQDHSLAVYPKEEFAARARKAAAVSRTSPEARAFIRNLAASADEQRPDAQGRITLSVGHRSYAGLTRECVVIGSVDFLEIWDAQAWATYQEETEAAFAAAEDDVLDGFL.

SpoVT-AbrB domains follow at residues 5–47 and 76–119; these read TYTP…PKEE and ADEQ…DAQA.

Belongs to the MraZ family. Forms oligomers.

It is found in the cytoplasm. It localises to the nucleoid. The polypeptide is Transcriptional regulator MraZ (Corynebacterium efficiens (strain DSM 44549 / YS-314 / AJ 12310 / JCM 11189 / NBRC 100395)).